The following is a 1616-amino-acid chain: Replicase large subunit (1616 aa).

Residues Phe-50–Asp-466 form a methyltransferase region. Residues Thr-72–Val-281 enclose the Alphavirus-like MT domain. The (+)RNA virus helicase ATP-binding domain maps to Met-800–Arg-962. The tract at residues Thr-828–Thr-1084 is helicase. Gly-832–Thr-839 is a binding site for ATP. Residues Arg-963–Ala-1115 enclose the (+)RNA virus helicase C-terminal domain. The RdRp catalytic domain maps to Met-1385 to Asn-1498.

Belongs to the ssRNA positive-strand viruses RNA-directed RNA polymerase family. As to quaternary structure, heterodimer of a large and a small subunit.

It catalyses the reaction RNA(n) + a ribonucleoside 5'-triphosphate = RNA(n+1) + diphosphate. It carries out the reaction ATP + H2O = ADP + phosphate + H(+). Its function is as follows. Is an RNA-dependent RNA polymerase active in viral RNA replication. Functionally, is a methyltransferase active in RNA capping and an RNA helicase. Methyltransferase displays a cytoplasmic capping enzyme activity. This function is necessary since all viral RNAs are synthesized in the cytoplasm, and host capping enzymes are restricted to the nucleus. Helicase region probably exhibits NTPase and RNA unwinding activities (Potential). It also acts as a suppressor of RNA-mediated gene silencing, also known as post-transcriptional gene silencing (PTGS), a mechanism of plant viral defense that limits the accumulation of viral RNAs. May mediate silencing suppression through either inhibition of HEN1-mediated siRNA or siRNA demethylation. The sequence is that of Replicase large subunit from Tobamovirus Ob.